We begin with the raw amino-acid sequence, 82 residues long: Cell division topological specificity factor (82 aa).

This sequence belongs to the MinE family.

Prevents the cell division inhibition by proteins MinC and MinD at internal division sites while permitting inhibition at polar sites. This ensures cell division at the proper site by restricting the formation of a division septum at the midpoint of the long axis of the cell. The chain is Cell division topological specificity factor from Hahella chejuensis (strain KCTC 2396).